We begin with the raw amino-acid sequence, 340 residues long: Protein-arginine kinase (340 aa).

The Phosphagen kinase C-terminal domain occupies 21 to 242 (VVLSSRIRLA…EQIIMQERVA (222 aa)). ATP contacts are provided by residues 24 to 28 (SSRIR), His-79, Arg-113, 164 to 168 (RASVM), and 195 to 200 (RGIYGE).

This sequence belongs to the ATP:guanido phosphotransferase family.

The catalysed reaction is L-arginyl-[protein] + ATP = N(omega)-phospho-L-arginyl-[protein] + ADP + H(+). Its function is as follows. Catalyzes the specific phosphorylation of arginine residues in proteins. The polypeptide is Protein-arginine kinase (Listeria welshimeri serovar 6b (strain ATCC 35897 / DSM 20650 / CCUG 15529 / CIP 8149 / NCTC 11857 / SLCC 5334 / V8)).